The following is a 173-amino-acid chain: NADH-quinone oxidoreductase subunit I 1 (173 aa).

2 4Fe-4S ferredoxin-type domains span residues 41–73 (IVLTRDPDGQERCVACNLCAVACPVGCIDLAKA) and 83–112 (EHFRINFARCIFCGYCEEACPTAAIQLTPD). Residues Cys-53, Cys-56, Cys-59, Cys-63, Cys-92, Cys-95, Cys-98, and Cys-102 each coordinate [4Fe-4S] cluster.

Belongs to the complex I 23 kDa subunit family. As to quaternary structure, NDH-1 is composed of 14 different subunits. Subunits NuoA, H, J, K, L, M, N constitute the membrane sector of the complex. [4Fe-4S] cluster is required as a cofactor.

The protein localises to the cell inner membrane. The catalysed reaction is a quinone + NADH + 5 H(+)(in) = a quinol + NAD(+) + 4 H(+)(out). Functionally, NDH-1 shuttles electrons from NADH, via FMN and iron-sulfur (Fe-S) centers, to quinones in the respiratory chain. The immediate electron acceptor for the enzyme in this species is believed to be ubiquinone. Couples the redox reaction to proton translocation (for every two electrons transferred, four hydrogen ions are translocated across the cytoplasmic membrane), and thus conserves the redox energy in a proton gradient. In Rhodopseudomonas palustris (strain BisA53), this protein is NADH-quinone oxidoreductase subunit I 1.